A 387-amino-acid polypeptide reads, in one-letter code: Phosphoglycerate kinase (387 aa).

Substrate is bound by residues 21–23 (DLN), Arg36, 59–62 (HLGR), Arg113, and Arg146. ATP contacts are provided by residues Lys197, Glu314, and 340-343 (GGDT).

The protein belongs to the phosphoglycerate kinase family. As to quaternary structure, monomer.

It localises to the cytoplasm. The catalysed reaction is (2R)-3-phosphoglycerate + ATP = (2R)-3-phospho-glyceroyl phosphate + ADP. It participates in carbohydrate degradation; glycolysis; pyruvate from D-glyceraldehyde 3-phosphate: step 2/5. This is Phosphoglycerate kinase from Photorhabdus laumondii subsp. laumondii (strain DSM 15139 / CIP 105565 / TT01) (Photorhabdus luminescens subsp. laumondii).